Reading from the N-terminus, the 447-residue chain is Xylose isomerase (447 aa).

Active-site residues include H102 and D105. The Mg(2+) site is built by E233, E269, H272, D297, D308, D310, and D340.

The protein belongs to the xylose isomerase family. In terms of assembly, homotetramer. The cofactor is Mg(2+).

It is found in the cytoplasm. The catalysed reaction is alpha-D-xylose = alpha-D-xylulofuranose. The polypeptide is Xylose isomerase (Pediococcus pentosaceus (strain ATCC 25745 / CCUG 21536 / LMG 10740 / 183-1w)).